We begin with the raw amino-acid sequence, 360 residues long: C-C chemokine receptor-like 2 (360 aa).

Residues 1–42 (MDNYTVAPDDEYDVLILDDYLDNSGPDQVPAPEFLSPQQVLQ) are Extracellular-facing. Residue Asn3 is glycosylated (N-linked (GlcNAc...) asparagine). A helical membrane pass occupies residues 43–63 (FCCAVFAVGLLDNVLAVFILV). Residues 64 to 73 (KYKGLKNLGN) lie on the Cytoplasmic side of the membrane. Residues 74–94 (IYFLNLALSNLCFLLPLPFWA) traverse the membrane as a helical segment. The Extracellular segment spans residues 95–109 (HTAAHGESPGNGTCK). N-linked (GlcNAc...) asparagine glycosylation is present at Asn105. A disulfide bond links Cys108 and Cys185. The helical transmembrane segment at 110 to 130 (VLVGLHSSGLYSEVFSNILLL) threads the bilayer. Residues 131–141 (VQGYRVFSQGR) lie on the Cytoplasmic side of the membrane. Residues 142 to 162 (LASIFTTVSCGIVACILAWAM) traverse the membrane as a helical segment. Over 163–202 (ATALSLPESVFYEPRMERQKHKCAFGKPHFLPIEAPLWKY) the chain is Extracellular. The chain crosses the membrane as a helical span at residues 203–223 (VLTSKMIILVLAFPLLVFIIC). Residues 224 to 243 (CRQLRRRQSFRERQYDLHKP) are Cytoplasmic-facing. The chain crosses the membrane as a helical span at residues 244–264 (ALVITGVFLLMWAPYNTVLFL). Residues 265-285 (SAFQEHLSLQDEKSSYHLDAS) are Extracellular-facing. Residues 286-307 (VQVTQLVATTHCCVNPLLYLLL) form a helical membrane-spanning segment. Over 308-360 (DRKAFMRYLRSLFPRCNDIPYQSSGGYQQAPPREGHGRPIELYSNLHQRQDII) the chain is Cytoplasmic.

It belongs to the G-protein coupled receptor 1 family. Expressed in macrophages, astrocytes, in glial cells. Constitutively expressed by mast cells. Detected in bronchial epithelium in OVA-induced airway inflammation. Up-regulated during dendritic cell (DC) maturation.

Its subcellular location is the cell membrane. Functionally, receptor for CCL19 and chemerin/RARRES2. Does not appear to be a signaling receptor, but may have a role in modulating chemokine-triggered immune responses by capturing and internalizing CCL19 or by presenting RARRES2 ligand to CMKLR1, a functional signaling receptor. Plays a critical role for the development of Th2 responses. The polypeptide is C-C chemokine receptor-like 2 (Ccrl2) (Mus musculus (Mouse)).